A 1250-amino-acid polypeptide reads, in one-letter code: DNA-directed RNA polymerase subunit beta (1250 aa).

Positions 1215-1250 (QDLNDDDINPDDTIDAELDDNLFDDDFDDTFDDDDL) are disordered.

It belongs to the RNA polymerase beta chain family. In terms of assembly, the RNAP catalytic core consists of 2 alpha, 1 beta, 1 beta' and 1 omega subunit. When a sigma factor is associated with the core the holoenzyme is formed, which can initiate transcription.

The catalysed reaction is RNA(n) + a ribonucleoside 5'-triphosphate = RNA(n+1) + diphosphate. In terms of biological role, DNA-dependent RNA polymerase catalyzes the transcription of DNA into RNA using the four ribonucleoside triphosphates as substrates. The chain is DNA-directed RNA polymerase subunit beta from Acetivibrio thermocellus (strain ATCC 27405 / DSM 1237 / JCM 9322 / NBRC 103400 / NCIMB 10682 / NRRL B-4536 / VPI 7372) (Clostridium thermocellum).